The following is a 653-amino-acid chain: 1-deoxy-D-xylulose-5-phosphate synthase (653 aa).

Thiamine diphosphate is bound by residues His-86 and 127–129; that span reads GHS. A Mg(2+)-binding site is contributed by Asp-158. Thiamine diphosphate is bound by residues 159–160, Asn-187, and Phe-294; that span reads GA. Asn-187 serves as a coordination point for Mg(2+). Residues 309 to 324 show a composition bias toward basic and acidic residues; that stretch reads KLEKTTSEPPPKKEPR. Residues 309-343 form a disordered region; sequence KLEKTTSEPPPKKEPRSPNAATAEPEAQPKPQPKP. Residue Glu-395 participates in thiamine diphosphate binding.

The protein belongs to the transketolase family. DXPS subfamily. As to quaternary structure, homodimer. Mg(2+) serves as cofactor. The cofactor is thiamine diphosphate.

The catalysed reaction is D-glyceraldehyde 3-phosphate + pyruvate + H(+) = 1-deoxy-D-xylulose 5-phosphate + CO2. It participates in metabolic intermediate biosynthesis; 1-deoxy-D-xylulose 5-phosphate biosynthesis; 1-deoxy-D-xylulose 5-phosphate from D-glyceraldehyde 3-phosphate and pyruvate: step 1/1. In terms of biological role, catalyzes the acyloin condensation reaction between C atoms 2 and 3 of pyruvate and glyceraldehyde 3-phosphate to yield 1-deoxy-D-xylulose-5-phosphate (DXP). This chain is 1-deoxy-D-xylulose-5-phosphate synthase, found in Chromohalobacter salexigens (strain ATCC BAA-138 / DSM 3043 / CIP 106854 / NCIMB 13768 / 1H11).